A 433-amino-acid chain; its full sequence is Mitochondrial inner membrane magnesium transporter MIT1 (433 aa).

Residues 257–298 (TNKLLRDMMKIKNNLQKLSNLLNALRTNIEKILNNENDMKNM) adopt a coiled-coil conformation. A helical membrane pass occupies residues 360–380 (FILLNAKISFSTLLFSISSVV). Residues 381–396 (TSLFGMNLKNFVEDSN) are Extracellular-facing. The helical transmembrane segment at 397–417 (YAFIIVSIFVSVWSIIGIYVT) threads the bilayer. Residues 418 to 433 (KNINTLLKFFDRYNFR) lie on the Mitochondrial matrix side of the membrane.

This sequence belongs to the CorA metal ion transporter (MIT) (TC 1.A.35) family.

The protein resides in the mitochondrion inner membrane. Mitochondrial inner membrane magnesium transporter required for mitochondrial magnesium homeostasis. Involved in the development of the sporozoite in the mosquito vector midgut. In Plasmodium berghei (strain Anka), this protein is Mitochondrial inner membrane magnesium transporter MIT1.